Reading from the N-terminus, the 363-residue chain is Ribosome-binding ATPase YchF (363 aa).

The region spanning 3-256 (FKCGIVGLPN…LDDEEKVEFL (254 aa)) is the OBG-type G domain. 12 to 17 (NVGKST) provides a ligand contact to ATP. Residues Ser16 and Thr36 each coordinate Mg(2+). The TGS domain maps to 278–361 (NLQTYFTAGV…QDGDVMHFRF (84 aa)).

Requires Mg(2+) as cofactor.

Functionally, ATPase that binds to both the 70S ribosome and the 50S ribosomal subunit in a nucleotide-independent manner. Does not hydrolyze GTP. This chain is Ribosome-binding ATPase YchF, found in Haemophilus influenzae (strain ATCC 51907 / DSM 11121 / KW20 / Rd).